The chain runs to 876 residues: MAP7 domain-containing protein 3 (876 aa).

Disordered regions lie at residues 30–139 (AEER…KFKA), 162–200 (GGVM…VDNT), and 402–438 (TEAP…IDKR). Residues 39–54 (INSSAGANKRSSSTPD) are compositionally biased toward polar residues. Positions 58–136 (LKNDVKQQLA…KQKQAEDTEK (79 aa)) form a coiled coil. 2 stretches are compositionally biased toward basic and acidic residues: residues 60-139 (NDVK…KFKA) and 169-196 (KSGK…DMQH). Ser417 and Ser483 each carry phosphoserine. 2 coiled-coil regions span residues 549–578 (IQIR…IARK) and 626–658 (SAMM…RRKA). 2 disordered regions span residues 558 to 683 (QSKN…EIFP) and 742 to 783 (IQGK…NPNH). 2 stretches are compositionally biased toward basic and acidic residues: residues 559–590 (SKNE…DKVP) and 630–659 (KSRD…RKAS). The span at 665–679 (SEDEADDEGESEDSL) shows a compositional bias: acidic residues. Basic residues predominate over residues 750 to 763 (SAKKPPTRPIRSRK). A compositionally biased stretch (polar residues) spans 771–782 (IRPTQSASSNPN).

This sequence belongs to the MAP7 family. As to expression, high expression in lung, skeletal muscle, brain, and kidney, with much weaker expression in spleen, small intestine, liver, and heart.

It is found in the cytoplasm. Its subcellular location is the cytoskeleton. The protein localises to the spindle. In terms of biological role, promotes the assembly and stability of microtubules. This Mus musculus (Mouse) protein is MAP7 domain-containing protein 3 (Map7d3).